The following is a 404-amino-acid chain: Multidrug resistance protein MdtG (404 aa).

A run of 11 helical transmembrane segments spans residues 19 to 39 (LGCFLTGAAFSLVMPFLPLYV), 56 to 76 (LVFSITFLFSAIASPFWGGLA), 90 to 110 (LGMAIVMLLMGMAQNIWQFLI), 113 to 133 (ALLGLLGGFIPNANALIATQV), 144 to 164 (TLSTGGVSGALLGPLAGGLLA), 171 to 191 (PVFFITASVLFICFLLTFFFI), 222 to 242 (LFVTTLIIQVATGSIAPILTL), 254 to 274 (IAFISGMIASVPGVAALLSAP), 288 to 308 (ILIVALIISVLLLIPMSFVQT), 317 to 337 (FLLGAADGALLPAVQTLLVYN), and 376 to 396 (AVFCVTAGVVLFNAIYSWNSL).

It belongs to the major facilitator superfamily. DHA1 family. MdtG (TC 2.A.1.2.20) subfamily.

It localises to the cell inner membrane. The polypeptide is Multidrug resistance protein MdtG (Salmonella schwarzengrund (strain CVM19633)).